We begin with the raw amino-acid sequence, 363 residues long: Protein arginine N-methyltransferase 2 (363 aa).

ANK repeat units lie at residues 22–46 (AAQT…FQDD) and 48–80 (LGWS…AVDK). An RMT2 domain is found at 111–363 (KTSAGDNLVF…RLPIAKMSLI (253 aa)). S-adenosyl-L-methionine contacts are provided by residues Phe-120, 186–191 (FGLGIV), 209–211 (EAH), 236–237 (WQ), and Asp-265.

This sequence belongs to the class I-like SAM-binding methyltransferase superfamily. RMT2 methyltransferase family. As to quaternary structure, monomer.

Its subcellular location is the cytoplasm. The protein localises to the nucleus. In terms of biological role, S-adenosyl-L-methionine-dependent protein-arginine N-methyltransferase that methylates the delta-nitrogen atom of arginine residues to form N5-methylarginine (type IV) in target proteins. Monomethylates ribosomal protein L12. This Cryptococcus neoformans var. neoformans serotype D (strain B-3501A) (Filobasidiella neoformans) protein is Protein arginine N-methyltransferase 2.